Reading from the N-terminus, the 301-residue chain is tRNA dimethylallyltransferase (301 aa).

5-12 lines the ATP pocket; the sequence is GPTASGKS. Position 7–12 (7–12) interacts with substrate; sequence TASGKS. Positions 30–33 are interaction with substrate tRNA; sequence DSMQ.

The protein belongs to the IPP transferase family. As to quaternary structure, monomer. The cofactor is Mg(2+).

The catalysed reaction is adenosine(37) in tRNA + dimethylallyl diphosphate = N(6)-dimethylallyladenosine(37) in tRNA + diphosphate. In terms of biological role, catalyzes the transfer of a dimethylallyl group onto the adenine at position 37 in tRNAs that read codons beginning with uridine, leading to the formation of N6-(dimethylallyl)adenosine (i(6)A). The protein is tRNA dimethylallyltransferase of Rhodopseudomonas palustris (strain TIE-1).